A 147-amino-acid chain; its full sequence is DNA polymerase III subunit chi (147 aa).

The protein belongs to the DNA polymerase III chi/HolC chain family. The DNA polymerase III holoenzyme complex contains at least 10 different subunits organized into 3 functionally essential subassemblies: the Pol III core, the beta sliding clamp processivity factor and the clamp-loading complex. The Pol III core (subunits alpha, epsilon and theta) contains the polymerase and the 3'-5' exonuclease proofreading activities. The polymerase is tethered to the template via the dimeric beta sliding clamp processivity factor. The clamp-loading complex (also called gamma complex) assembles the beta sliding clamp onto the primed template and plays a central role in the organization and communication at the replication fork. The clamp-loading complex contains delta, delta', psi and chi, and 3 copies of either or both of two different DnaX proteins, gamma and tau. The DNA replisome complex has a single clamp loader (3 tau and 1 each of delta, delta', psi and chi subunits) which binds 3 Pol III cores (1 core on the leading strand and 2 on the lagging strand) each with a beta sliding clamp dimer. Additional proteins in the replisome are other copies of gamma, psi (holD) and chi (this protein), SSB, DNA helicase and RNA primase. The clamp loader hydrolyzes ATP to assemble the beta processivity factor onto the primed template and plays a central role in the organization and communication at the replication fork. The only subunit of the DNA polymerase III holoenzyme known to interact with single-stranded DNA binding protein (SSB). Interacts directly with the psi subunit (holD). Interacts directly with DNA helicase YoaA. It binds to HolD and YoaA, but not both simultaneously.

It carries out the reaction DNA(n) + a 2'-deoxyribonucleoside 5'-triphosphate = DNA(n+1) + diphosphate. Its function is as follows. Part of the beta sliding clamp loading complex, which hydrolyzes ATP to load the beta clamp onto primed DNA to form the DNA replication pre-initiation complex. DNA polymerase III is a complex, multichain enzyme responsible for most of the replicative synthesis in bacteria. This DNA polymerase also exhibits 3' to 5' exonuclease activity. Genetically identified as involved in the repair of replication forks and tolerance of the chain-terminating nucleoside analog 3' AZT. This subunit may stabilize YoaA and/or stimulate the helicase activity of YoaA. This Escherichia coli (strain K12) protein is DNA polymerase III subunit chi.